The chain runs to 1128 residues: Large proline-rich protein BAG6 (1128 aa).

Met-1 carries the post-translational modification N-acetylmethionine. The region spanning 17 to 92 is the Ubiquitin-like domain; that stretch reads LEVLVKTLDS…HLVERAPPQT (76 aa). Disordered regions lie at residues 87-126, 185-267, 380-435, 456-523, and 555-598; these read RAPP…SVHD, CRGG…NHPS, VTMT…AASH, IQDS…ALPG, and PGMA…SASD. A compositionally biased stretch (low complexity) spans 95 to 108; the sequence is PSGASSGTGSASAT. Residue Ser-96 is modified to Phosphoserine. Phosphothreonine is present on Thr-117. Residues 189–201 are compositionally biased toward polar residues; it reads SQAQHSQPPSQMP. Copy 1 of the repeat occupies 236-265; the sequence is RASAQSPGLSPSGPAPAGPTPAPETNAPNH. The 4 X 29 AA approximate repeats stretch occupies residues 236-630; it reads RASAQSPGLS…MTSPTITVAM (395 aa). The segment covering 238–247 has biased composition (low complexity); it reads SAQSPGLSPS. 2 stretches are compositionally biased toward pro residues: residues 248–257 and 388–402; these read GPAPAGPTPA and RPPP…PPGP. Residues 403–412 show a composition bias toward low complexity; sequence GQASSLAPSS. Repeat 2 spans residues 410 to 438; that stretch reads PSSTTVESSTEGAPPPGPAPPPAASHPRV. Composition is skewed to pro residues over residues 422–433 and 502–515; these read APPPGPAPPPAA and PTPP…PGGP. Over residues 564–581 the composition is skewed to low complexity; the sequence is ATASASAGTTNTATTAGP. A run of 2 repeats spans residues 569–596 and 602–630. The segment covering 583 to 594 has biased composition (pro residues); it reads PGGPAQPPPPQP. 2 disordered regions span residues 648–689 and 939–1128; these read QTAA…GLGP and VGDP…AEDP. Over residues 652 to 677 the composition is skewed to pro residues; sequence PPAPPPPPPPPPPAPEQQTAPPPGSP. A compositionally biased stretch (gly residues) spans 678 to 688; the sequence is PGGAGSPGGLG. 2 positions are modified to phosphoserine: Ser-960 and Ser-969. Positions 999–1016 are enriched in low complexity; it reads AAAETEPWAAAVPPEWVP. The tract at residues 1006–1036 is required for interaction with GET4; the sequence is WAAAVPPEWVPIIQQDIQSQRKVKPQPPLSD. The Nuclear localization site motif lies at 1008-1050; it reads AAVPPEWVPIIQQDIQSQRKVKPQPPLSDAYLSGMPAKRRKTM. The interval 1018 to 1128 is sufficient for the delivery of client proteins to the endoplasmic reticulum; sequence IQQDIQSQRK…NAHRAFAEDP (111 aa). The residue at position 1049 (Thr-1049) is a Phosphothreonine. The BAG-similar domain, required and sufficient for interaction with UBL4A stretch occupies residues 1054-1111; that stretch reads GPQLLLSEAVSRAAKAAGARPLTSPESLSRDLEAPEVQESYRQQLRADIQKRLQEDPN. The segment covering 1062–1072 has biased composition (low complexity); the sequence is AVSRAAKAAGA. Ser-1077 and Ser-1113 each carry phosphoserine.

In terms of assembly, component of the BAG6/BAT3 complex, also named BAT3 complex, at least composed of BAG6, UBL4A and GET4/TRC35. Interacts with GET4; the interaction is direct and localizes BAG6 in the cytosol. Interacts with UBL4A; the interaction is direct and required for UBL4A protein stability. Interacts with AIFM1. Interacts with HSPA2. Interacts with CTCFL. Interacts with p300/EP300. Interacts (via ubiquitin-like domain) with RNF126; required for BAG6-dependent ubiquitination of proteins mislocalized to the cytosol. Interacts (via ubiquitin-like domain) with SGTA; SGTA competes with RNF126 by binding the same region of BAG6, thereby promoting deubiquitination of BAG6-target proteins and rescuing them from degradation. Interacts with ricin A chain. Interacts with VCP and AMFR; both form the VCP/p97-AMFR/gp78 complex. Interacts with SYVN1. Interacts with USP13; the interaction is direct and may mediate UBL4A deubiquitination. Interacts with ZFAND2B. Interacts with KPNA2. Interacts with UBQLN4. In terms of processing, ricin can induce a cleavage by the caspase CASP3. The released C-terminal peptide induces apoptosis.

Its subcellular location is the cytoplasm. It localises to the cytosol. The protein resides in the nucleus. The protein localises to the secreted. It is found in the extracellular exosome. Functionally, ATP-independent molecular chaperone preventing the aggregation of misfolded and hydrophobic patches-containing proteins. Functions as part of a cytosolic protein quality control complex, the BAG6/BAT3 complex, which maintains these client proteins in a soluble state and participates in their proper delivery to the endoplasmic reticulum or alternatively can promote their sorting to the proteasome where they undergo degradation. The BAG6/BAT3 complex is involved in the post-translational delivery of tail-anchored/type II transmembrane proteins to the endoplasmic reticulum membrane. Recruited to ribosomes, it interacts with the transmembrane region of newly synthesized tail-anchored proteins and together with SGTA and ASNA1 mediates their delivery to the endoplasmic reticulum. Client proteins that cannot be properly delivered to the endoplasmic reticulum are ubiquitinated by RNF126, an E3 ubiquitin-protein ligase associated with BAG6 and are sorted to the proteasome. SGTA which prevents the recruitment of RNF126 to BAG6 may negatively regulate the ubiquitination and the proteasomal degradation of client proteins. Similarly, the BAG6/BAT3 complex also functions as a sorting platform for proteins of the secretory pathway that are mislocalized to the cytosol either delivering them to the proteasome for degradation or to the endoplasmic reticulum. The BAG6/BAT3 complex also plays a role in the endoplasmic reticulum-associated degradation (ERAD), a quality control mechanism that eliminates unwanted proteins of the endoplasmic reticulum through their retrotranslocation to the cytosol and their targeting to the proteasome. It maintains these retrotranslocated proteins in an unfolded yet soluble state condition in the cytosol to ensure their proper delivery to the proteasome. BAG6 is also required for selective ubiquitin-mediated degradation of defective nascent chain polypeptides by the proteasome. In this context, it may participate in the production of antigenic peptides and play a role in antigen presentation in immune response. BAG6 is also involved in endoplasmic reticulum stress-induced pre-emptive quality control, a mechanism that selectively attenuates the translocation of newly synthesized proteins into the endoplasmic reticulum and reroutes them to the cytosol for proteasomal degradation. BAG6 may ensure the proper degradation of these proteins and thereby protects the endoplasmic reticulum from protein overload upon stress. By inhibiting the polyubiquitination and subsequent proteasomal degradation of HSPA2 it may also play a role in the assembly of the synaptonemal complex during spermatogenesis. Also positively regulates apoptosis by interacting with and stabilizing the proapoptotic factor AIFM1. By controlling the steady-state expression of the IGF1R receptor, indirectly regulates the insulin-like growth factor receptor signaling pathway. In terms of biological role, involved in DNA damage-induced apoptosis: following DNA damage, accumulates in the nucleus and forms a complex with p300/EP300, enhancing p300/EP300-mediated p53/TP53 acetylation leading to increase p53/TP53 transcriptional activity. When nuclear, may also act as a component of some chromatin regulator complex that regulates histone 3 'Lys-4' dimethylation (H3K4me2). Released extracellularly via exosomes, it is a ligand of the natural killer/NK cells receptor NCR3 and stimulates NK cells cytotoxicity. It may thereby trigger NK cells cytotoxicity against neighboring tumor cells and immature myeloid dendritic cells (DC). Its function is as follows. May mediate ricin-induced apoptosis. The chain is Large proline-rich protein BAG6 from Sus scrofa (Pig).